The sequence spans 618 residues: Transport protein particle subunit trs85-2 (618 aa).

The protein belongs to the TRS85 family. Part of the multisubunit TRAPP (transport protein particle) complexes I and II.

Its subcellular location is the golgi apparatus. The protein localises to the cis-Golgi network. Functionally, component of the TRAPP I and TRAPP II complexes. TRAPP I plays a key role in the late stages of endoplasmic reticulum to Golgi traffic. TRAPP II seems to play a role in intra-Golgi transport. Has a role late in meiosis following DNA replication. The chain is Transport protein particle subunit trs85-2 (trs85-2) from Schizosaccharomyces pombe (strain 972 / ATCC 24843) (Fission yeast).